We begin with the raw amino-acid sequence, 535 residues long: Dimethylaniline monooxygenase [N-oxide-forming] 2 (535 aa).

The residue at position 2 (alanine 2) is an N-acetylalanine. Residues glycine 9 to serine 13, glutamate 32, leucine 40 to tryptophan 41, and asparagine 61 to threonine 62 contribute to the FAD site. Residues threonine 60 to asparagine 61 and serine 195 to aspartate 198 contribute to the NADP(+) site. Lysine 492 is covalently cross-linked (Glycyl lysine isopeptide (Lys-Gly) (interchain with G-Cter in SUMO)). A helical transmembrane segment spans residues leucine 510–serine 530.

It belongs to the FMO family. FAD is required as a cofactor. Requires Mg(2+) as cofactor. As to expression, lung.

The protein resides in the microsome membrane. Its subcellular location is the endoplasmic reticulum membrane. Catalyzes the oxidative metabolism of numerous xenobiotics, including mainly therapeutic drugs and insecticides that contain a soft nucleophile, most commonly nitrogen and sulfur and participates to their bioactivation. The sequence is that of Dimethylaniline monooxygenase [N-oxide-forming] 2 from Cavia porcellus (Guinea pig).